The primary structure comprises 197 residues: MALLLLILESCSAGTYALNCKLTVKYRTLQGLCSVNGKTFLDFGDENHEGNATMLCPALYQSLTDISEVMWSLQSGNDALNVTTRSQYYQGEFIDGFWDINTDEQHSIYVYPLNKTWRESHSDNSSAMEQWKNKNLEKDIRNVLMVDFSCCLNKSSPHFREMPTLPTTAAHVDQPRSMACKSSPFDGLIMILLIYIL.

The N-terminal stretch at Met-1–Ala-17 is a signal peptide. N-linked (GlcNAc...) asparagine glycans are attached at residues Asn-51, Asn-81, and Asn-114. A lipid anchor (GPI-anchor amidated serine) is attached at Ser-177. Residues Met-178–Leu-197 constitute a propeptide, removed in mature form.

The protein belongs to the NKG2D ligand family. As to expression, expressed in skin, and weakly in large intestine.

The protein resides in the cell membrane. Ligand for the KLRK1 immunosurveillance receptor. Binding to KLRK1 stimulates cell lysis in vitro. This chain is Histocompatibility antigen 60c, found in Mus musculus (Mouse).